Reading from the N-terminus, the 380-residue chain is Growth-regulating factor 4 (380 aa).

The interval 1 to 21 (MDLQLKQWRSQQQNESEEQGS) is disordered. One can recognise a QLQ domain in the interval 82–117 (FFSWAQWQELELQALIYRYMLAGASVPQELLLPIKK). The WRC domain occupies 151 to 195 (DPEPGRCKRTDGKKWRCSRDVVAGHKYCDRHIHRGRNRSRKPVET). Short sequence motifs (bipartite nuclear localization signal) lie at residues 156–166 (RCKRTDGKKWR) and 184–191 (RGRNRSRK). Disordered regions lie at residues 222-270 (NNNH…GRSD) and 284-330 (RSSD…NMRN). Composition is skewed to low complexity over residues 228–245 (SSGSSQPLHLSHQQSCSS) and 285–296 (SSDSTSSPMSSS). Positions 297–320 (TCHLSISMPGNNTSSDVSLKLSTG) are enriched in polar residues.

It belongs to the GRF family. As to expression, strongly expressed in actively growing and developing tissues, such as roots, upper stems, and shoot tips containing the shoot apical meristem (SAM) and flower buds. Also expressed in mature flowers, but weakly expressed in mature stems and leaves.

The protein resides in the nucleus. Functionally, transcription activator that plays a role in the regulation of cell expansion in leaf and cotyledons tissues. Component of a network formed by miR396, the GRFs and their interacting factors (GIFs) acting in the regulation of meristem function, at least partially through the control of cell proliferation. This Arabidopsis thaliana (Mouse-ear cress) protein is Growth-regulating factor 4 (GRF4).